A 132-amino-acid chain; its full sequence is Ribosome-binding factor A (132 aa).

It belongs to the RbfA family. In terms of assembly, monomer. Binds 30S ribosomal subunits, but not 50S ribosomal subunits or 70S ribosomes.

It is found in the cytoplasm. Functionally, one of several proteins that assist in the late maturation steps of the functional core of the 30S ribosomal subunit. Associates with free 30S ribosomal subunits (but not with 30S subunits that are part of 70S ribosomes or polysomes). Required for efficient processing of 16S rRNA. May interact with the 5'-terminal helix region of 16S rRNA. The sequence is that of Ribosome-binding factor A from Burkholderia cenocepacia (strain ATCC BAA-245 / DSM 16553 / LMG 16656 / NCTC 13227 / J2315 / CF5610) (Burkholderia cepacia (strain J2315)).